Reading from the N-terminus, the 292-residue chain is Acetylglutamate kinase (292 aa).

Residues 64–65 (GG), Arg-86, and Asn-190 contribute to the substrate site.

It belongs to the acetylglutamate kinase family. ArgB subfamily.

It localises to the cytoplasm. The enzyme catalyses N-acetyl-L-glutamate + ATP = N-acetyl-L-glutamyl 5-phosphate + ADP. The protein operates within amino-acid biosynthesis; L-arginine biosynthesis; N(2)-acetyl-L-ornithine from L-glutamate: step 2/4. In terms of biological role, catalyzes the ATP-dependent phosphorylation of N-acetyl-L-glutamate. The polypeptide is Acetylglutamate kinase (Geobacter sp. (strain M21)).